Consider the following 347-residue polypeptide: MSENSIRLTQYSHGAGCGCKISPKVLETILHSEQAKFVDPNLLVGNETRDDAAVYDLGNGTSVISTTDFFMPIVDNPFDFGRIAATNAISDIFAMGGKPIMAIAILGWPINKLSPEIAREVTEGGRYACRQAGIALAGGHSIDAPEPIFGLAVTGIVPTERVKKNSTAQAGCKLFLTKPLGIGVLTTAEKKSLLKPEHQGLATEVMCRMNIAGASFANIEGVKAMTDVTGFGLLGHLSEMCQGAGVQARVDYEAIPKLPGVEEYIKLGAVPGGTERNFASYGHLMGEMPREVRDLLCDPQTSGGLLLAVMPEAENEVKTTAAEFGIELTAIGELVPARGGRAMVEIR.

Residue Cys17 is part of the active site. ATP is bound by residues Lys20 and 48 to 50; that span reads TRD. Asp51 is a Mg(2+) binding site. Residues Asp68, Asp91, and 139-141 each bind ATP; that span reads GHS. Residue Asp91 participates in Mg(2+) binding. Position 227 (Asp227) interacts with Mg(2+).

This sequence belongs to the selenophosphate synthase 1 family. Class I subfamily. As to quaternary structure, homodimer. Mg(2+) is required as a cofactor.

The enzyme catalyses hydrogenselenide + ATP + H2O = selenophosphate + AMP + phosphate + 2 H(+). Synthesizes selenophosphate from selenide and ATP. This is Selenide, water dikinase from Shigella flexneri serotype 5b (strain 8401).